The sequence spans 2013 residues: Cell adhesion molecule DSCAM (2013 aa).

Positions 1 to 17 (MWILALSLFQSFANVFS) are cleaved as a signal peptide. Residues 19–1594 (EPHSSLYFVN…EGLTTNEGLK (1576 aa)) lie on the Extracellular side of the membrane. Ig-like C2-type domains follow at residues 20 to 119 (PHSS…VHIK), 125 to 216 (PYTV…ARLF), 225 to 305 (PSIL…AKVI), 313 to 401 (PLKA…VQVV), 407 to 500 (PKII…ARIN), 504 to 592 (PASI…VHVT), 596 to 685 (PPFI…SQLI), 690 to 783 (PKFV…MYLT), and 787 to 883 (PAMI…LTVQ). 9 disulfide bridges follow: Cys-46–Cys-102, Cys-145–Cys-197, Cys-246–Cys-293, Cys-335–Cys-385, Cys-428–Cys-484, Cys-525–Cys-575, Cys-617–Cys-669, Cys-711–Cys-766, and Cys-809–Cys-865. N-linked (GlcNAc...) asparagine glycosylation occurs at Asn-78. Asn-470 carries an N-linked (GlcNAc...) asparagine glycan. N-linked (GlcNAc...) asparagine glycosylation is present at Asn-666. 4 Fibronectin type-III domains span residues 885–982 (PPDP…ADEA), 987–1086 (PPQE…TLED), 1091–1187 (PPEN…TKED), and 1191–1285 (PPAG…AKAP). Residues Asn-1160 and Asn-1250 are each glycosylated (N-linked (GlcNAc...) asparagine). In terms of domain architecture, Ig-like C2-type 10 spans 1285-1377 (PARILTFSGT…DEIILNLQVQ (93 aa)). Cys-1307 and Cys-1359 are joined by a disulfide. Fibronectin type-III domains follow at residues 1379-1473 (PPDQ…TLGK) and 1474-1575 (EPQF…TIPP). Residues 1595–1615 (ILVTISCILVGVLLLFVLLLV) form a helical membrane-spanning segment. The Cytoplasmic segment spans residues 1616–2013 (VRRRRREQRL…NPYAKSYTLV (398 aa)). A required for netrin-mediated axon repulsion of neuronal growth cones region spans residues 1616–2013 (VRRRRREQRL…NPYAKSYTLV (398 aa)). Disordered stretches follow at residues 1718 to 1809 (LVDV…SASS) and 1920 to 2013 (RDLS…YTLV). A compositionally biased stretch (low complexity) spans 1799–1809 (SSMVSTESASS). A compositionally biased stretch (polar residues) spans 1949 to 1968 (EASSSTSSTREGQQSWQQGA).

As to quaternary structure, homodimer; mediates homophilic interactions to promote cell adhesion. Interacts with DCC; the interaction is abolished in response to NTN1. Interacts (via extracellular domain) with NTN1. Interacts (via extracellular domain) with UNC5C (via Ig-like C2-type domain). Interacts with PTK2. Interacts with FYN. Phosphorylated at tyrosine residues. Phosphorylation is enhanced by NTN1.

Its subcellular location is the cell membrane. It localises to the cell projection. The protein localises to the axon. The protein resides in the dendrite. It is found in the growth cone. Its subcellular location is the synapse. Its function is as follows. Cell adhesion molecule that plays a role in neuronal self-avoidance. Promotes repulsion between specific neuronal processes of either the same cell or the same subtype of cells. Mediates within retinal amacrine and ganglion cell subtypes both isoneuronal self-avoidance for creating an orderly dendritic arborization and heteroneuronal self-avoidance to maintain the mosaic spacing between amacrine and ganglion cell bodies. Receptor for netrin required for axon guidance independently of and in collaboration with the receptor DCC. Might also collaborate with UNC5C in NTN1-mediated axon repulsion independently of DCC. In spinal cord development plays a role in guiding commissural axons projection and pathfinding across the ventral midline to reach the floor plate upon ligand binding. Mediates intracellular signaling by stimulating the activation of MAPK8 and MAP kinase p38. Adhesion molecule that promotes lamina-specific synaptic connections in the retina: expressed in specific subsets of interneurons and retinal ganglion cells (RGCs) and promotes synaptic connectivity via homophilic interactions. The sequence is that of Cell adhesion molecule DSCAM (Dscam) from Rattus norvegicus (Rat).